The primary structure comprises 124 residues: Ribosome-binding factor A (124 aa).

It belongs to the RbfA family. As to quaternary structure, monomer. Binds 30S ribosomal subunits, but not 50S ribosomal subunits or 70S ribosomes.

The protein resides in the cytoplasm. In terms of biological role, one of several proteins that assist in the late maturation steps of the functional core of the 30S ribosomal subunit. Associates with free 30S ribosomal subunits (but not with 30S subunits that are part of 70S ribosomes or polysomes). Required for efficient processing of 16S rRNA. May interact with the 5'-terminal helix region of 16S rRNA. This is Ribosome-binding factor A from Thiobacillus denitrificans (strain ATCC 25259 / T1).